The primary structure comprises 438 residues: Thymidine phosphorylase (438 aa).

It belongs to the thymidine/pyrimidine-nucleoside phosphorylase family. As to quaternary structure, homodimer.

The catalysed reaction is thymidine + phosphate = 2-deoxy-alpha-D-ribose 1-phosphate + thymine. The protein operates within pyrimidine metabolism; dTMP biosynthesis via salvage pathway; dTMP from thymine: step 1/2. The enzymes which catalyze the reversible phosphorolysis of pyrimidine nucleosides are involved in the degradation of these compounds and in their utilization as carbon and energy sources, or in the rescue of pyrimidine bases for nucleotide synthesis. This is Thymidine phosphorylase from Colwellia psychrerythraea (strain 34H / ATCC BAA-681) (Vibrio psychroerythus).